The chain runs to 777 residues: Ribosome-releasing factor 2, mitochondrial (777 aa).

The tr-type G domain occupies 68–353 (AKIRNIGIMA…AVTMYLPSPE (286 aa)). GTP contacts are provided by residues 77–84 (AHIDAGKT), 141–145 (DTPGH), and 195–198 (NKMD).

It belongs to the TRAFAC class translation factor GTPase superfamily. Classic translation factor GTPase family. EF-G/EF-2 subfamily.

The protein resides in the mitochondrion. It carries out the reaction GTP + H2O = GDP + phosphate + H(+). Its function is as follows. Mitochondrial GTPase that mediates the disassembly of ribosomes from messenger RNA at the termination of mitochondrial protein biosynthesis. Acts in collaboration with MRRF. GTP hydrolysis follows the ribosome disassembly and probably occurs on the ribosome large subunit. Not involved in the GTP-dependent ribosomal translocation step during translation elongation. The sequence is that of Ribosome-releasing factor 2, mitochondrial from Pongo abelii (Sumatran orangutan).